A 566-amino-acid chain; its full sequence is Peroxisomal leader peptide-processing protease (566 aa).

Positions 319-531 (ALAALLPPEV…LQPALQQYSQ (213 aa)) are serine protease. Residues histidine 372, aspartate 408, and serine 481 each act as charge relay system in the active site.

The protein belongs to the peptidase S1B family. As to quaternary structure, homodimer. Forms a heterodimer with the C-terminal cleavage product (45 kDa form). Forms a heterodimer with the N-terminal cleavage product (15 kDa form). Interacts with PEX5. Interacts with LONP2. Self-cleavage gives rise to an N-terminal 15-kDa fragment and C-terminal 45-kDa fragment upon import into the peroxisomes. The full-lengh TYSND1 is the active the proteolytic processing of PTS1- and PTS2-proteins and in self-cleavage, and intermolecular self-cleavage of TYSND1 down-regulates its protease activity.

It is found in the peroxisome. Its function is as follows. Peroxisomal protease that mediates both the removal of the leader peptide from proteins containing a PTS2 target sequence and processes several PTS1-containing proteins. Catalyzes the processing of PTS1-proteins involved in the peroxisomal beta-oxidation of fatty acids. The sequence is that of Peroxisomal leader peptide-processing protease (TYSND1) from Homo sapiens (Human).